A 544-amino-acid polypeptide reads, in one-letter code: MAAKDVQFGNEVRQKMVNGVNILANAVRVTLGPKGRNVVLDRAFGGPHITKDGVSVAKEIELKDKFENMGAQMVKEVASKTNDVAGDGTTTATVLAQSIVAEGMKYVTAGMNPTDLKRGIDKAVAALVDELKNIAKPCDTSKEIAQVGSISANSDEQVGAIIAEAMEKVGKEGVITVEDGKSLENELDVVEGMQFDRGYLSPYFINDAEKQIAGLDNPFVLLFDKKISNIRDLLPVLEQVAKASRPLLIIAEDVEGEALATLVVNNIRGILKTVAVKAPGFGDRRKAMLQDIAILTGGVVISEEVGLSLEKATLDDLGQAKRIEIGKENTTIIDGFGDAAQIEARVAEIRQQIETATSDYGKEKLQERVAKLAGGVAVIKVGAATEVEMKEKKDRVEDALHATRAAVEEGVVAGGGVALLRARAALENLHTGNADQEAGVQIVLRAVESPLRQIVAKAGGEPSVVVNKVLEGKGNYGYKAGSGEYGDMIEMGVLDPAKVTRSALQHAASIAGLMLTTDCMIAEIPERKPAMPDMGGMGGMGGMM.

Residues 30–33 (TLGP), Lys-51, 87–91 (DGTTT), Gly-415, and Asp-495 each bind ATP.

It belongs to the chaperonin (HSP60) family. In terms of assembly, forms a cylinder of 14 subunits composed of two heptameric rings stacked back-to-back. Interacts with the co-chaperonin GroES.

The protein resides in the cytoplasm. The enzyme catalyses ATP + H2O + a folded polypeptide = ADP + phosphate + an unfolded polypeptide.. Its function is as follows. Together with its co-chaperonin GroES, plays an essential role in assisting protein folding. The GroEL-GroES system forms a nano-cage that allows encapsulation of the non-native substrate proteins and provides a physical environment optimized to promote and accelerate protein folding. The polypeptide is Chaperonin GroEL (Neisseria flavescens).